A 286-amino-acid chain; its full sequence is Energy-coupling factor transporter ATP-binding protein EcfA2 (286 aa).

The 244-residue stretch at 3 to 246 (IQFNQVSYIY…KTQLLKWHIE (244 aa)) folds into the ABC transporter domain. 40–47 (GQTGSGKS) contacts ATP.

It belongs to the ABC transporter superfamily. Energy-coupling factor EcfA family. In terms of assembly, forms a stable energy-coupling factor (ECF) transporter complex composed of 2 membrane-embedded substrate-binding proteins (S component), 2 ATP-binding proteins (A component) and 2 transmembrane proteins (T component).

Its subcellular location is the cell membrane. Functionally, ATP-binding (A) component of a common energy-coupling factor (ECF) ABC-transporter complex. Unlike classic ABC transporters this ECF transporter provides the energy necessary to transport a number of different substrates. This Staphylococcus epidermidis (strain ATCC 12228 / FDA PCI 1200) protein is Energy-coupling factor transporter ATP-binding protein EcfA2.